Here is a 228-residue protein sequence, read N- to C-terminus: L-ribulose-5-phosphate 4-epimerase UlaF (228 aa).

Substrate contacts are provided by residues 26–27 (GN), 43–44 (SG), and 72–73 (SS). Residues D74, H93, and H95 each coordinate Zn(2+). D118 functions as the Proton donor/acceptor in the catalytic mechanism. H167 lines the Zn(2+) pocket. The active-site Proton donor/acceptor is Y225.

Belongs to the aldolase class II family. AraD/FucA subfamily. The cofactor is Zn(2+).

The enzyme catalyses L-ribulose 5-phosphate = D-xylulose 5-phosphate. It functions in the pathway cofactor degradation; L-ascorbate degradation; D-xylulose 5-phosphate from L-ascorbate: step 4/4. In terms of biological role, catalyzes the isomerization of L-ribulose 5-phosphate to D-xylulose 5-phosphate. Is involved in the anaerobic L-ascorbate utilization. The chain is L-ribulose-5-phosphate 4-epimerase UlaF from Escherichia coli (strain SE11).